The following is a 59-amino-acid chain: Cecropin-A (59 aa).

The N-terminal stretch at 1 to 23 (MNFNKLFVIVLLAALAFFGQAEA) is a signal peptide. Leu-57 is subject to Leucine amide.

The protein belongs to the cecropin family.

It localises to the secreted. Cecropins have lytic and antibacterial activity against several Gram-positive and Gram-negative bacteria. The chain is Cecropin-A (CECA) from Culex pipiens pipiens (Northern house mosquito).